The chain runs to 857 residues: Envelope glycoprotein B (857 aa).

Residues 1–21 (MTRRRVLSVVVLLAALACRLG) form the signal peptide. Topologically, residues 22–732 (AQTPEQPAPP…SGFISFFKNP (711 aa)) are virion surface. Intrachain disulfides connect C51–C528, C68–C484, C141–C206, C295–C342, and C551–C588. N-linked (GlcNAc...) asparagine; by host glycosylation is present at N76. The tract at residues 108-114 (IYNGWYA) is involved in fusion and/or binding to host membrane. N163 carries an N-linked (GlcNAc...) asparagine; by host glycan. The segment at 192–200 (GWLIWTYRT) is involved in fusion and/or binding to host membrane. N-linked (GlcNAc...) asparagine; by host glycosylation is found at N290, N329, N348, and N395. The disordered stretch occupies residues 398 to 452 (ELTTPTSSPPSSPSPPAPPAARGSTSAAVLRRRRRDAGNATTPVPPAAPGKSLGT). The span at 404–416 (SSPPSSPSPPAPP) shows a compositional bias: pro residues. N436, N563, and N629 each carry an N-linked (GlcNAc...) asparagine; by host glycan. 2 hydrophobic membrane proximal region regions span residues 678–730 (LDNA…SFFK) and 709–729 (NLVS…ISFF). Residues 733 to 753 (FGGMLILVLVAGVVILVISLT) traverse the membrane as a helical segment. Topologically, residues 754–857 (RRTRQMSQQP…ALLGEAETEF (104 aa)) are intravirion. Positions 832-857 (FPGLRRRRYHDPETAAALLGEAETEF) are disordered. Low complexity predominate over residues 845–857 (TAAALLGEAETEF).

Belongs to the herpesviridae glycoprotein B family. As to quaternary structure, homotrimer; disulfide-linked. Binds to heparan sulfate proteoglycans. Interacts with gH/gL heterodimer. In terms of processing, a proteolytic cleavage by host furin generates two subunits that remain linked by disulfide bonds.

It is found in the virion membrane. The protein localises to the host cell membrane. It localises to the host endosome membrane. Its subcellular location is the host Golgi apparatus membrane. In terms of biological role, envelope glycoprotein that forms spikes at the surface of virion envelope. Essential for the initial attachment to heparan sulfate moieties of the host cell surface proteoglycans. Involved in fusion of viral and cellular membranes leading to virus entry into the host cell. Following initial binding to its host receptors, membrane fusion is mediated by the fusion machinery composed at least of gB and the heterodimer gH/gL. May be involved in the fusion between the virion envelope and the outer nuclear membrane during virion egress. In Epstein-Barr virus (strain GD1) (HHV-4), this protein is Envelope glycoprotein B.